Here is a 743-residue protein sequence, read N- to C-terminus: Type VI secretion system spike protein VgrG1 (743 aa).

The protein belongs to the VgrG protein family.

The protein resides in the secreted. The catalysed reaction is L-arginyl-[protein] + NAD(+) = N(omega)-(ADP-D-ribosyl)-L-arginyl-[protein] + nicotinamide + H(+). Part of the type VI secretion system specialized secretion system, which delivers several virulence factors in both prokaryotic and eukaryotic cells during infection. Acts directly as an secreted effector with an actin ADP-ribosyltransferase activity that disrupts the host actin cytoskeleton, leading to a decrease in host cell viability and an increase in apoptosis. The sequence is that of Type VI secretion system spike protein VgrG1 (vgrG1) from Aeromonas hydrophila subsp. hydrophila (strain ATCC 7966 / DSM 30187 / BCRC 13018 / CCUG 14551 / JCM 1027 / KCTC 2358 / NCIMB 9240 / NCTC 8049).